The following is a 1362-amino-acid chain: DNA-directed RNA polymerase subunit beta (1362 aa).

It belongs to the RNA polymerase beta chain family. As to quaternary structure, the RNAP catalytic core consists of 2 alpha, 1 beta, 1 beta' and 1 omega subunit. When a sigma factor is associated with the core the holoenzyme is formed, which can initiate transcription.

The enzyme catalyses RNA(n) + a ribonucleoside 5'-triphosphate = RNA(n+1) + diphosphate. Its function is as follows. DNA-dependent RNA polymerase catalyzes the transcription of DNA into RNA using the four ribonucleoside triphosphates as substrates. This is DNA-directed RNA polymerase subunit beta from Acinetobacter baumannii (strain AB307-0294).